A 217-amino-acid chain; its full sequence is UDP-N-acetylglucosamine transferase subunit ALG14 (217 aa).

At 1-3 the chain is on the lumenal side; that stretch reads MLS. A helical membrane pass occupies residues 4-26; it reads ILILAATAAGLVILLFQRLWTVL. The Cytoplasmic portion of the chain corresponds to 27–217; sequence GPHHVTPRES…PKSVYLGRIV (191 aa).

The protein belongs to the ALG14 family. Forms with ALG13 the active heterodimeric UDP-N-acetylglucosamine transferase complex.

Its subcellular location is the endoplasmic reticulum membrane. Part of the UDP-N-acetylglucosamine transferase complex that operates in the biosynthetic pathway of dolichol-linked oligosaccharides, the glycan precursors employed in protein asparagine (N)-glycosylation. The assembly of dolichol-linked oligosaccharides begins on the cytosolic side of the endoplasmic reticulum membrane and finishes in its lumen. The sequential addition of sugars to dolichol pyrophosphate produces dolichol-linked oligosaccharides containing fourteen sugars, including two GlcNAcs, nine mannoses and three glucoses. Once assembled, the oligosaccharides are transferred from the lipid to nascent proteins by oligosaccharyltransferases. Functions as a protein-membrane adapter recruiting ALG13 at the cytoplasmic face of the endoplasmic reticulum, where the complex catalyzes the second step of dolichol pyrophosphate biosynthesis, transferring a beta1,4-linked N-acetylglucosamine (GlcNAc) from UDP-GlcNAc to GlcNAc-pyrophosphatedolichol (Gn-PDol) to produce N,N'-diacetylchitobiosyl diphosphodolichol. N,N'-diacetylchitobiosyl diphosphodolichol is a substrate for ALG1, the following enzyme in the biosynthetic pathway. The chain is UDP-N-acetylglucosamine transferase subunit ALG14 from Mus musculus (Mouse).